Here is a 106-residue protein sequence, read N- to C-terminus: Protein S40-3 (106 aa).

The segment at 1 to 65 (MSEEFQESEV…TEEEGEMTPP (65 aa)) is disordered. Residues 16 to 41 (SFTRKDNKISHNNENYERKSTEKDKI) are compositionally biased toward basic and acidic residues.

Belongs to the senescence regulator S40 family.

Its subcellular location is the nucleus. In terms of biological role, regulates senescence either by modulating WRKY53 or by activating SAG12. Affects the natural variation of cyst nematodes sex ratio and susceptibility to parasitic nematodes, depending on single nucleotide polymorphism (SNPs) between cultivars. The protein is Protein S40-3 of Arabidopsis thaliana (Mouse-ear cress).